The sequence spans 102 residues: uncharacterized protein (102 aa).

Functionally, essential for virus function. This is an uncharacterized protein from Saccharolobus solfataricus (Sulfolobus solfataricus).